Reading from the N-terminus, the 237-residue chain is Insulin-like growth factor-binding protein 4 (237 aa).

The 81-residue stretch at 2–82 folds into the IGFBP N-terminal domain; that stretch reads EAIHCPPCSE…VHGQGVCMEL (81 aa). Intrachain disulfides connect C6–C32, C9–C34, C17–C35, C23–C38, C46–C59, and C53–C79. An N-linked (GlcNAc...) asparagine glycan is attached at N104. 4 disulfides stabilise this stretch: C110–C117, C153–C183, C194–C205, and C207–C228. The region spanning 150–228 is the Thyroglobulin type-1 domain; it reads QGSCQSELHR…GLEPKGELDC (79 aa). Position 234 is a phosphoserine (S234).

As to quaternary structure, binds IGF2 more than IGF1. There are two different molecular mass variants (29 kDa and 24 kDa forms). The 29 kDa form was shown to be N-glycosylated. As to expression, detected in adult ewe, liver &gt; kidney &gt; lung &gt;&gt; heart and also in several fetal tissues.

The protein resides in the secreted. In terms of biological role, IGF-binding proteins prolong the half-life of the IGFs and have been shown to either inhibit or stimulate the growth promoting effects of the IGFs on cell culture. They alter the interaction of IGFs with their cell surface receptors. In Ovis aries (Sheep), this protein is Insulin-like growth factor-binding protein 4 (IGFBP4).